Consider the following 89-residue polypeptide: Small ribosomal subunit protein uS14 (89 aa).

The protein belongs to the universal ribosomal protein uS14 family. Part of the 30S ribosomal subunit. Contacts proteins S3 and S10.

Functionally, binds 16S rRNA, required for the assembly of 30S particles and may also be responsible for determining the conformation of the 16S rRNA at the A site. This is Small ribosomal subunit protein uS14 from Leuconostoc citreum (strain KM20).